The chain runs to 88 residues: Small ribosomal subunit protein uS17 (88 aa).

Belongs to the universal ribosomal protein uS17 family. As to quaternary structure, part of the 30S ribosomal subunit.

Its function is as follows. One of the primary rRNA binding proteins, it binds specifically to the 5'-end of 16S ribosomal RNA. This is Small ribosomal subunit protein uS17 from Pseudomonas entomophila (strain L48).